A 339-amino-acid chain; its full sequence is MRRLSNKGEHQRNLNDRQRKVLYCIVKEYIENKKPVSSQRVLEVSNINFSSATIRNDMKKLEYLGYIYQPHTSAGRVPTDKGLRFYYEEMVKLSKETEELNLEVDTFRSIPLADPEKVLLLAGNLLARLAEGYVLIERPNPRDLKILRVMLIPVSEDYLIFSILTEFGISKITPIRIHEDLNWEEIERQLNFLLRGRTVEDVLTGKVETLRGSGILKLIESVMNEKLERYIDVGFENLLKDDTLSLEDIKHLLEEIKDHRFLESLIGNDKDVTVKIGKEIGSKKLERFAVFSGRYYKGSSPIGSVHLFTSKITRYDRNHRVFNYVLNRLSEYFTSAARR.

The protein belongs to the HrcA family.

In terms of biological role, negative regulator of class I heat shock genes (grpE-dnaK-dnaJ and groELS operons). Prevents heat-shock induction of these operons. The polypeptide is Heat-inducible transcription repressor HrcA (Thermotoga neapolitana (strain ATCC 49049 / DSM 4359 / NBRC 107923 / NS-E)).